Reading from the N-terminus, the 451-residue chain is Exodeoxyribonuclease 7 large subunit (451 aa).

It belongs to the XseA family. In terms of assembly, heterooligomer composed of large and small subunits.

It localises to the cytoplasm. It catalyses the reaction Exonucleolytic cleavage in either 5'- to 3'- or 3'- to 5'-direction to yield nucleoside 5'-phosphates.. In terms of biological role, bidirectionally degrades single-stranded DNA into large acid-insoluble oligonucleotides, which are then degraded further into small acid-soluble oligonucleotides. This chain is Exodeoxyribonuclease 7 large subunit, found in Neisseria meningitidis serogroup B (strain ATCC BAA-335 / MC58).